Consider the following 265-residue polypeptide: Phosphate import ATP-binding protein PstB (265 aa).

The region spanning 18–260 (MECRDCHVYY…PEDPRTESYI (243 aa)) is the ABC transporter domain. 50 to 57 (GPSGCGKS) contributes to the ATP binding site.

This sequence belongs to the ABC transporter superfamily. Phosphate importer (TC 3.A.1.7) family. The complex is composed of two ATP-binding proteins (PstB), two transmembrane proteins (PstC and PstA) and a solute-binding protein (PstS).

Its subcellular location is the cell inner membrane. It carries out the reaction phosphate(out) + ATP + H2O = ADP + 2 phosphate(in) + H(+). Its function is as follows. Part of the ABC transporter complex PstSACB involved in phosphate import. Responsible for energy coupling to the transport system. The protein is Phosphate import ATP-binding protein PstB of Ruegeria pomeroyi (strain ATCC 700808 / DSM 15171 / DSS-3) (Silicibacter pomeroyi).